The chain runs to 204 residues: MKLLITGFDPFGGEKTNPAIEAVKRLPAAIAGATVVPLEIPTVFGTCAEVVRQAIITERPDVVLSVGQAGGRSALTPERIAINLDDGRIPDNAGFQPVDQPIQPNGPAAYFTQLPVKAMAQAIRQAGLPSHVSTTAGTYVCNHIMYQVQHLRATEFPQLQAGFIHIPFLPEQVVQRSGVPSLSLTDDVRGLTAAIRAIVIAHAD.

Residues glutamate 78, cysteine 141, and histidine 165 contribute to the active site.

Belongs to the peptidase C15 family. Homotetramer.

It localises to the cytoplasm. It catalyses the reaction Release of an N-terminal pyroglutamyl group from a polypeptide, the second amino acid generally not being Pro.. Functionally, removes 5-oxoproline from various penultimate amino acid residues except L-proline. The chain is Pyrrolidone-carboxylate peptidase from Levilactobacillus brevis (strain ATCC 367 / BCRC 12310 / CIP 105137 / JCM 1170 / LMG 11437 / NCIMB 947 / NCTC 947) (Lactobacillus brevis).